Consider the following 353-residue polypeptide: MEVDTATFVRLHHELLCAHEGPSIISKFDAIKKVKLGTLANQSGGANNITEAFFDKLRNFERKSEAYLASDLAERELTRDTHKAIVFVTKSVLLGGKSLKDLLPYGVIVCAFIFIPETASVLDNVRVMIGNQKRPLTVALIKYMAKSLNCDLVGDSYDTFYYCNSSAYGKNLISVSENDFSNPQRALLSVGDLCYQAARSIHVAAANYIRIFDRMPPGFQPSKHLFRIIGVLDMETLKTMVTSNIAREPGMFSHDNVKDVLHRTGVFSPNHHFSAVILWRGWASTYAYMFNQEQLNMLSGTSGLAGDFGKYKLTYGSTFDEGVIHVQSQFVTPEAVRKRNIYPDLSALKGGSS.

The protein belongs to the phytoreovirus non-structural protein 10 family.

Its function is as follows. Suppressor of RNA-mediated gene silencing, also known as post-transcriptional gene silencing (PTGS), a mechanism of plant viral defense that limits the accumulation of viral RNAs. The protein is Suppressor of RNA-mediated gene silencing of Rice dwarf virus (isolate Fujian) (RDV).